Reading from the N-terminus, the 356-residue chain is Protein-glutamate methylesterase/protein-glutamine glutaminase 2 (356 aa).

A Response regulatory domain is found at 6-123 (KVLIVDDSAL…KQFLEESSIR (118 aa)). Asp57 is subject to 4-aspartylphosphate. Residues 165–356 (VQRTEKVVVV…AAAIVKACNS (192 aa)) enclose the CheB-type methylesterase domain. Residues Ser177, His203, and Asp299 contribute to the active site.

Belongs to the CheB family. In terms of processing, phosphorylated by CheA. Phosphorylation of the N-terminal regulatory domain activates the methylesterase activity.

Its subcellular location is the cytoplasm. It carries out the reaction [protein]-L-glutamate 5-O-methyl ester + H2O = L-glutamyl-[protein] + methanol + H(+). The enzyme catalyses L-glutaminyl-[protein] + H2O = L-glutamyl-[protein] + NH4(+). Functionally, involved in chemotaxis. Part of a chemotaxis signal transduction system that modulates chemotaxis in response to various stimuli. Catalyzes the demethylation of specific methylglutamate residues introduced into the chemoreceptors (methyl-accepting chemotaxis proteins or MCP) by CheR. Also mediates the irreversible deamidation of specific glutamine residues to glutamic acid. The polypeptide is Protein-glutamate methylesterase/protein-glutamine glutaminase 2 (Oleidesulfovibrio alaskensis (strain ATCC BAA-1058 / DSM 17464 / G20) (Desulfovibrio alaskensis)).